A 309-amino-acid chain; its full sequence is MPKVRTKDLIEQFQLELISGEEGIHRPIDTSDLSRPGIEMAGFFTYYPADRVQLLGKTELTFFDTLTTEQKQERMKALCTEETPCIIITRNQDVPDELLQASRESGMPLLRSSQTTTRLSSRLTNYLEGKLAPTTAVHGVLVDIYGVGVLITGQSGVGKSETALELVKRGHRLVADDSVEIRQEDEDTLVGSSPDLIEHLLEIRGLGIINVMTLFGAGAVRNYKRITLVINLEIWDQKKNYDRLGLDEEKMKIIDTELTKITLPVRPGRNLAVIIEVAAMNFRLKRMGVNAAQQFSERLMSAIELGNQE.

Catalysis depends on residues histidine 138 and lysine 159. Glycine 153–serine 160 provides a ligand contact to ATP. Mg(2+) is bound at residue serine 160. Residue aspartate 177 is the Proton acceptor; for phosphorylation activity. Proton donor; for dephosphorylation activity of the active site. The important for the catalytic mechanism of both phosphorylation and dephosphorylation stretch occupies residues leucine 201–asparagine 210. Glutamate 202 lines the Mg(2+) pocket. Arginine 243 is a catalytic residue. The important for the catalytic mechanism of dephosphorylation stretch occupies residues proline 264–arginine 269.

The protein belongs to the HPrK/P family. In terms of assembly, homohexamer. The cofactor is Mg(2+).

The catalysed reaction is [HPr protein]-L-serine + ATP = [HPr protein]-O-phospho-L-serine + ADP + H(+). It carries out the reaction [HPr protein]-O-phospho-L-serine + phosphate + H(+) = [HPr protein]-L-serine + diphosphate. Its function is as follows. Catalyzes the ATP- as well as the pyrophosphate-dependent phosphorylation of a specific serine residue in HPr, a phosphocarrier protein of the phosphoenolpyruvate-dependent sugar phosphotransferase system (PTS). HprK/P also catalyzes the pyrophosphate-producing, inorganic phosphate-dependent dephosphorylation (phosphorolysis) of seryl-phosphorylated HPr (P-Ser-HPr). The two antagonistic activities of HprK/P are regulated by several intracellular metabolites, which change their concentration in response to the absence or presence of rapidly metabolisable carbon sources (glucose, fructose, etc.) in the growth medium. Also phosphorylates/dephosphorylates the HPr-like catabolite repression protein crh on a specific serine residue. Therefore, by controlling the phosphorylation state of HPr and crh, HPrK/P is a sensor enzyme that plays a major role in the regulation of carbon metabolism and sugar transport: it mediates carbon catabolite repression (CCR), and regulates PTS-catalyzed carbohydrate uptake and inducer exclusion. The polypeptide is HPr kinase/phosphorylase (Bacillus cereus (strain G9842)).